The primary structure comprises 378 residues: Glutamate 5-kinase (378 aa).

Residue Lys20 participates in ATP binding. Substrate-binding residues include Ser60, Asp147, and Asn159. ATP-binding positions include 179–180 (TD) and 221–227 (TGGMLTK). The 79-residue stretch at 286-364 (RGRVVLDDGA…SQIARILGSM (79 aa)) folds into the PUA domain.

The protein belongs to the glutamate 5-kinase family.

The protein localises to the cytoplasm. It carries out the reaction L-glutamate + ATP = L-glutamyl 5-phosphate + ADP. Its pathway is amino-acid biosynthesis; L-proline biosynthesis; L-glutamate 5-semialdehyde from L-glutamate: step 1/2. Its function is as follows. Catalyzes the transfer of a phosphate group to glutamate to form L-glutamate 5-phosphate. The sequence is that of Glutamate 5-kinase from Bordetella pertussis (strain Tohama I / ATCC BAA-589 / NCTC 13251).